The sequence spans 472 residues: 23S rRNA (uracil(1939)-C(5))-methyltransferase RlmD (472 aa).

Residues M1–K15 show a composition bias toward basic residues. The tract at residues M1–H23 is disordered. The 65-residue stretch at H23 to Q87 folds into the TRAM domain. 4 residues coordinate [4Fe-4S] cluster: C100, C106, C109, and C188. S-adenosyl-L-methionine-binding residues include Q296, F325, N330, E346, N374, and D395. C428 serves as the catalytic Nucleophile.

This sequence belongs to the class I-like SAM-binding methyltransferase superfamily. RNA M5U methyltransferase family. RlmD subfamily.

The catalysed reaction is uridine(1939) in 23S rRNA + S-adenosyl-L-methionine = 5-methyluridine(1939) in 23S rRNA + S-adenosyl-L-homocysteine + H(+). Catalyzes the formation of 5-methyl-uridine at position 1939 (m5U1939) in 23S rRNA. In Paraburkholderia xenovorans (strain LB400), this protein is 23S rRNA (uracil(1939)-C(5))-methyltransferase RlmD.